Here is a 642-residue protein sequence, read N- to C-terminus: Capsid vertex component 2 (642 aa).

The interval 1–48 (MSLLHTFWRLPVAVFFEPHEENVLRCPERVLRRLLEDAAVTMRGGGWR) is interaction with major capsid protein/MCP. The disordered stretch occupies residues 97-125 (DEGPSPRTLLQPPCRPRSSSPGTGVAGAS).

It belongs to the herpesviridae CVC2 protein family. In terms of assembly, heterodimerizes with CVC1. Interacts with major capsid protein/MCP and triplex capsid protein 1/TRX1 at the pentamer vertices. Interacts with the large tegument protein/LTP.

Its subcellular location is the virion. The protein localises to the host nucleus. In terms of biological role, capsid vertex-specific component that plays a role during viral DNA encapsidation, assuring correct genome cleavage and presumably stabilizing capsids that contain full-length viral genomes. Participates in the interaction between the capsid and the tegument through interaction with the large tegument protein/LTP. In Homo sapiens (Human), this protein is Capsid vertex component 2.